A 103-amino-acid polypeptide reads, in one-letter code: Small ribosomal subunit protein uS10 (103 aa).

The protein belongs to the universal ribosomal protein uS10 family. In terms of assembly, part of the 30S ribosomal subunit.

In terms of biological role, involved in the binding of tRNA to the ribosomes. The chain is Small ribosomal subunit protein uS10 from Chlorobaculum parvum (strain DSM 263 / NCIMB 8327) (Chlorobium vibrioforme subsp. thiosulfatophilum).